The primary structure comprises 211 residues: tRNA (guanine-N(7)-)-methyltransferase (211 aa).

S-adenosyl-L-methionine contacts are provided by E44, D69, D96, and D118. D118 is a catalytic residue. K122 serves as a coordination point for substrate. Residues 124–129 are interaction with RNA; that stretch reads RHEKRR. Substrate-binding positions include D154 and 191-194; that span reads TEYE.

This sequence belongs to the class I-like SAM-binding methyltransferase superfamily. TrmB family.

It carries out the reaction guanosine(46) in tRNA + S-adenosyl-L-methionine = N(7)-methylguanosine(46) in tRNA + S-adenosyl-L-homocysteine. Its pathway is tRNA modification; N(7)-methylguanine-tRNA biosynthesis. Its function is as follows. Catalyzes the formation of N(7)-methylguanine at position 46 (m7G46) in tRNA. The chain is tRNA (guanine-N(7)-)-methyltransferase from Streptococcus mutans serotype c (strain ATCC 700610 / UA159).